Reading from the N-terminus, the 299-residue chain is GTPase Era (299 aa).

The 171-residue stretch at Arg-5 to Pro-175 folds into the Era-type G domain. The interval Gly-13–Ser-20 is G1. Residue Gly-13–Ser-20 participates in GTP binding. The segment at Gln-39–His-43 is G2. Positions Asp-60–Gly-63 are G3. Residues Asp-60 to Leu-64 and Thr-124 to Asp-127 each bind GTP. The tract at residues Thr-124–Asp-127 is G4. The interval Val-154–Ala-156 is G5. In terms of domain architecture, KH type-2 spans Val-206–Lys-285.

This sequence belongs to the TRAFAC class TrmE-Era-EngA-EngB-Septin-like GTPase superfamily. Era GTPase family. In terms of assembly, monomer.

It is found in the cell envelope. The protein resides in the secreted. It localises to the cell wall. Functionally, exhibits GTPase activity. Binds RNA but is probably not involved in ribosome assembly in mycobacteria. This Mycobacterium sp. (strain JLS) protein is GTPase Era.